Reading from the N-terminus, the 288-residue chain is uncharacterized protein (288 aa).

2 disordered regions span residues 31 to 52 (KAVDAPPASQIPGLSDPREAPS) and 179 to 288 (YPSK…VELK). Polar residues predominate over residues 206–217 (RPSSPTNFSKLI). Residues 221 to 236 (YKDEWLQQQADSDKRA) show a composition bias toward basic and acidic residues. Low complexity-rich tracts occupy residues 237–249 (PQTPQSSVSSPSP) and 267–276 (AAESSPLSSA).

This is an uncharacterized protein from Bos taurus (Bovine).